The primary structure comprises 111 residues: Ig kappa chain V-III region MOPC 70 (111 aa).

Residues Asp1–Cys23 are framework-1. A disulfide bridge links Cys23 with Cys92. Residues Arg24–Asn38 are complementarity-determining-1. The tract at residues Trp39–Tyr53 is framework-2. The segment at Ala54–Ser60 is complementarity-determining-2. The segment at Gly61–Cys92 is framework-3. The segment at Gln93–Thr101 is complementarity-determining-3. The tract at residues Phe102–Lys111 is framework-4.

This Mus musculus (Mouse) protein is Ig kappa chain V-III region MOPC 70.